Consider the following 100-residue polypeptide: Urease subunit gamma (100 aa).

This sequence belongs to the urease gamma subunit family. As to quaternary structure, heterotrimer of UreA (gamma), UreB (beta) and UreC (alpha) subunits. Three heterotrimers associate to form the active enzyme.

It localises to the cytoplasm. The enzyme catalyses urea + 2 H2O + H(+) = hydrogencarbonate + 2 NH4(+). The protein operates within nitrogen metabolism; urea degradation; CO(2) and NH(3) from urea (urease route): step 1/1. The sequence is that of Urease subunit gamma from Allorhizobium ampelinum (strain ATCC BAA-846 / DSM 112012 / S4) (Agrobacterium vitis (strain S4)).